Reading from the N-terminus, the 465-residue chain is L-cystine uptake protein TcyP (465 aa).

Helical transmembrane passes span L3 to M23, V34 to P54, Y73 to F93, I105 to I125, P184 to V204, A224 to T246, F263 to A283, L338 to A358, F370 to G390, and F394 to I414.

The protein belongs to the dicarboxylate/amino acid:cation symporter (DAACS) (TC 2.A.23) family.

The protein resides in the membrane. Functionally, mediates uptake of L-cystine, the oxidized form of L-cysteine. This Shouchella clausii (strain KSM-K16) (Alkalihalobacillus clausii) protein is L-cystine uptake protein TcyP.